The primary structure comprises 923 residues: Isoleucine--tRNA ligase (923 aa).

Residues 57-67 (PYANGDIHMGH) carry the 'HIGH' region motif. Glutamate 553 serves as a coordination point for L-isoleucyl-5'-AMP. The 'KMSKS' region motif lies at 594 to 598 (KMSKS). ATP is bound at residue lysine 597. Zn(2+) is bound by residues cysteine 888, cysteine 891, cysteine 908, and cysteine 911.

It belongs to the class-I aminoacyl-tRNA synthetase family. IleS type 1 subfamily. Monomer. Zn(2+) is required as a cofactor.

It localises to the cytoplasm. It carries out the reaction tRNA(Ile) + L-isoleucine + ATP = L-isoleucyl-tRNA(Ile) + AMP + diphosphate. Catalyzes the attachment of isoleucine to tRNA(Ile). As IleRS can inadvertently accommodate and process structurally similar amino acids such as valine, to avoid such errors it has two additional distinct tRNA(Ile)-dependent editing activities. One activity is designated as 'pretransfer' editing and involves the hydrolysis of activated Val-AMP. The other activity is designated 'posttransfer' editing and involves deacylation of mischarged Val-tRNA(Ile). This is Isoleucine--tRNA ligase from Shouchella clausii (strain KSM-K16) (Alkalihalobacillus clausii).